We begin with the raw amino-acid sequence, 287 residues long: Thymidylate synthase (287 aa).

Arg21 serves as a coordination point for dUMP. Asn51 contacts (6R)-5,10-methylene-5,6,7,8-tetrahydrofolate. 150 to 151 (RR) contacts dUMP. Residue Cys170 is the Nucleophile of the active site. DUMP contacts are provided by residues 190–193 (RSGD), Asn201, and 231–233 (HIY). (6R)-5,10-methylene-5,6,7,8-tetrahydrofolate is bound at residue Asp193. (6R)-5,10-methylene-5,6,7,8-tetrahydrofolate is bound at residue Ala286.

It belongs to the thymidylate synthase family. Bacterial-type ThyA subfamily. In terms of assembly, homodimer.

The protein resides in the cytoplasm. The enzyme catalyses dUMP + (6R)-5,10-methylene-5,6,7,8-tetrahydrofolate = 7,8-dihydrofolate + dTMP. It functions in the pathway pyrimidine metabolism; dTTP biosynthesis. Functionally, catalyzes the reductive methylation of 2'-deoxyuridine-5'-monophosphate (dUMP) to 2'-deoxythymidine-5'-monophosphate (dTMP) while utilizing 5,10-methylenetetrahydrofolate (mTHF) as the methyl donor and reductant in the reaction, yielding dihydrofolate (DHF) as a by-product. This enzymatic reaction provides an intracellular de novo source of dTMP, an essential precursor for DNA biosynthesis. The polypeptide is Thymidylate synthase (Mycoplasma genitalium (strain ATCC 33530 / DSM 19775 / NCTC 10195 / G37) (Mycoplasmoides genitalium)).